The following is a 193-amino-acid chain: N-(5'-phosphoribosyl)anthranilate isomerase (193 aa).

This sequence belongs to the TrpF family.

It carries out the reaction N-(5-phospho-beta-D-ribosyl)anthranilate = 1-(2-carboxyphenylamino)-1-deoxy-D-ribulose 5-phosphate. It participates in amino-acid biosynthesis; L-tryptophan biosynthesis; L-tryptophan from chorismate: step 3/5. The sequence is that of N-(5'-phosphoribosyl)anthranilate isomerase from Streptococcus mutans serotype c (strain ATCC 700610 / UA159).